Here is a 149-residue protein sequence, read N- to C-terminus: MTHREELLPPMKWDAWGDPAAAKPLSDGVRSLLKQVVGLADSEQPELDPAQVQLRPSALSGADHDALARIVGTEYFRTADRDRLLHAGGKSTPDLLRRKDTGVQDAPDAVLLPGGPNGGGRRRRHLALLLRPRHCRGPVWWRHQRRWWA.

The polypeptide is Protein Rv2250A (Mycobacterium tuberculosis (strain ATCC 25618 / H37Rv)).